The sequence spans 560 residues: MKSALKKSVVSTSISLILASGMAAFAAHAADDVKLKATKTNVAFSDFTPTEYSTKGKPNIIVLTMDDLGYGQLPFDKGSFDPKTMENREVVDTYKIGIDKAIEAAQKSTPTLLSLMDEGVRFTNGYVAHGVSGPSRAAIMTGRAPARFGVYSNTDAQDGIPLTETFLPELFQNHGYYTAAVGKWHLSKISNVPVPEDKQTRDYHDNFTTFSAEEWQPQNRGFDYFMGFHAAGTAYYNSPSLFKNRERVPAKGYISDQLTDEAIGVVDRAKTLDQPFMLYLAYNAPHLPNDNPAPDQYQKQFNTGSQTADNYYASVYSVDQGVKRILEQLKKNGQYDNTIILFTSDNGAVIDGPLPLNGAQKGYKSQTYPGGTHTPMFMWWKGKLQPGNYDKLISAMDFYPTALDAADISIPKDLKLDGVSLLPWLQDKKQGEPHKNLTWITSYSHWFDEENIPFWDNYHKFVRHQSDDYPHNPNTEDLSQFSYTVRNNDYSLVYTVENNQLGLYKLTDLQQKDNLAAANPQVVKEMQGVVREFIDSSQPPLSEVNQEKFNNIKKALSEAK.

Positions 1 to 29 (MKSALKKSVVSTSISLILASGMAAFAAHA) are cleaved as a signal peptide. Asp-66, Asp-67, and Ser-132 together coordinate Ca(2+). Residue Ser-132 is the Nucleophile of the active site. Ser-132 carries the 3-oxoalanine (Ser) modification. His-185 is a catalytic residue. 2 residues coordinate Ca(2+): Asp-345 and Asn-346.

The protein belongs to the sulfatase family. Ca(2+) is required as a cofactor. The conversion to 3-oxoalanine (also known as C-formylglycine, FGly), of a serine or cysteine residue in prokaryotes and of a cysteine residue in eukaryotes, is critical for catalytic activity.

This is an uncharacterized protein from Escherichia coli (strain K12).